The sequence spans 153 residues: UPF0266 membrane protein YE1773 (153 aa).

Helical transmembrane passes span 6–26, 45–65, and 67–87; these read IVLI…EFIM, IDCA…VMAN, and EPLT…LSYI.

Belongs to the UPF0266 family.

It localises to the cell inner membrane. This is UPF0266 membrane protein YE1773 from Yersinia enterocolitica serotype O:8 / biotype 1B (strain NCTC 13174 / 8081).